The primary structure comprises 415 residues: MSILETFDPAVAEAIRHETERQEYNLELIASENFVSEAVMEAQGSVLTNKYAEGYPGKRYYGGCHHVDVVENLAIERAKELFGADHANVQPHSGSQANMAVYFSVLKPGDTILGMNLSHGGHLTHGSPVNFSGRFFNVVPYGVSQETETIDFNEVERLALEHKPKLIVVGASAYPRVLDFAAFRAIADKVGALVMVDMAHIAGLVAAGLHPSPVPYAEFVTTTTHKTLRGPRGGMILCREEFAKTLNSNIFPGIQGGPLMHVIAAKAVAFKEALAPEFKLYQEQIVKNARTLADELMKRGFRLVSGGTDNHLMLVNLTGTELTGKVAEEALDKAGITVNKNTVPFETRSPFVTSGFRIGTPAATSHGLKEAEMVEVAAFIAEALANVGNEAKLAEVKGKVNALMGRFPLYASRLK.

(6S)-5,6,7,8-tetrahydrofolate contacts are provided by residues Leu117 and 121-123; that span reads GHL. N6-(pyridoxal phosphate)lysine is present on Lys226. Residues Glu241 and 349–351 contribute to the (6S)-5,6,7,8-tetrahydrofolate site; that span reads SPF.

The protein belongs to the SHMT family. Homodimer. It depends on pyridoxal 5'-phosphate as a cofactor.

It localises to the cytoplasm. The catalysed reaction is (6R)-5,10-methylene-5,6,7,8-tetrahydrofolate + glycine + H2O = (6S)-5,6,7,8-tetrahydrofolate + L-serine. It functions in the pathway one-carbon metabolism; tetrahydrofolate interconversion. The protein operates within amino-acid biosynthesis; glycine biosynthesis; glycine from L-serine: step 1/1. Its function is as follows. Catalyzes the reversible interconversion of serine and glycine with tetrahydrofolate (THF) serving as the one-carbon carrier. This reaction serves as the major source of one-carbon groups required for the biosynthesis of purines, thymidylate, methionine, and other important biomolecules. Also exhibits THF-independent aldolase activity toward beta-hydroxyamino acids, producing glycine and aldehydes, via a retro-aldol mechanism. The protein is Serine hydroxymethyltransferase of Geobacter metallireducens (strain ATCC 53774 / DSM 7210 / GS-15).